Consider the following 612-residue polypeptide: UvrABC system protein C (612 aa).

A GIY-YIG domain is found at 20 to 98; that stretch reads THSGVYRMLD…IKQHRPKYNI (79 aa). The region spanning 208–243 is the UVR domain; it reads SSVLEEISAKMYQASEDMEYEKAQVYRDQLVVLRKL.

Belongs to the UvrC family. As to quaternary structure, interacts with UvrB in an incision complex.

Its subcellular location is the cytoplasm. In terms of biological role, the UvrABC repair system catalyzes the recognition and processing of DNA lesions. UvrC both incises the 5' and 3' sides of the lesion. The N-terminal half is responsible for the 3' incision and the C-terminal half is responsible for the 5' incision. This Francisella tularensis subsp. mediasiatica (strain FSC147) protein is UvrABC system protein C.